A 123-amino-acid polypeptide reads, in one-letter code: Histone H1-like protein HC1 (123 aa).

The disordered stretch occupies residues 54–123 (IKAEKSGLLK…KPSKARGFRK (70 aa)). Over residues 61-75 (LLKRKPSTKAPAKVK) the composition is skewed to basic residues. The segment covering 85-102 (KSSAAAAKTSKAVKASKP) has biased composition (low complexity). Residues 103–123 (ASKKTAAKKVKKPSKARGFRK) are compositionally biased toward basic residues.

Belongs to the histone H1/H5 family. HCT subfamily.

In terms of biological role, might have a role analogous to that of eukaryotic histone proteins. The polypeptide is Histone H1-like protein HC1 (hctA) (Chlamydia pneumoniae (Chlamydophila pneumoniae)).